Consider the following 975-residue polypeptide: Probable outer membrane protein PmpA (975 aa).

An N-terminal signal peptide occupies residues 1-51 (MNRVIEIHAHYDQRQLSQSPNTNFLVHHPYLTLIPKFLLGALIVYAPYSFA). The 277-residue stretch at 699–975 (RSLIPTSYFG…SLSCGGYVGF (277 aa)) folds into the Autotransporter domain.

The protein belongs to the PMP outer membrane protein family.

Its subcellular location is the secreted. The protein localises to the cell wall. The protein resides in the cell outer membrane. The sequence is that of Probable outer membrane protein PmpA (pmpA) from Chlamydia trachomatis serovar D (strain ATCC VR-885 / DSM 19411 / UW-3/Cx).